The following is a 435-amino-acid chain: 3-phosphoshikimate 1-carboxyvinyltransferase (435 aa).

Residues lysine 23, serine 24, and arginine 28 each coordinate 3-phosphoshikimate. Lysine 23 is a phosphoenolpyruvate binding site. Positions 97 and 125 each coordinate phosphoenolpyruvate. 3-phosphoshikimate-binding residues include serine 170, serine 171, glutamine 172, serine 198, aspartate 314, asparagine 338, and lysine 342. Glutamine 172 is a binding site for phosphoenolpyruvate. The Proton acceptor role is filled by aspartate 314. Phosphoenolpyruvate contacts are provided by arginine 346, arginine 388, and lysine 413.

The protein belongs to the EPSP synthase family. Monomer.

Its subcellular location is the cytoplasm. The enzyme catalyses 3-phosphoshikimate + phosphoenolpyruvate = 5-O-(1-carboxyvinyl)-3-phosphoshikimate + phosphate. Its pathway is metabolic intermediate biosynthesis; chorismate biosynthesis; chorismate from D-erythrose 4-phosphate and phosphoenolpyruvate: step 6/7. Its function is as follows. Catalyzes the transfer of the enolpyruvyl moiety of phosphoenolpyruvate (PEP) to the 5-hydroxyl of shikimate-3-phosphate (S3P) to produce enolpyruvyl shikimate-3-phosphate and inorganic phosphate. In Sodalis glossinidius (strain morsitans), this protein is 3-phosphoshikimate 1-carboxyvinyltransferase.